A 72-amino-acid chain; its full sequence is Large ribosomal subunit protein bL28 (72 aa).

It belongs to the bacterial ribosomal protein bL28 family.

The chain is Large ribosomal subunit protein bL28 from Chlorobium phaeobacteroides (strain BS1).